Here is an 893-residue protein sequence, read N- to C-terminus: NEDD4-binding protein 1 (893 aa).

Residues 59–143 (QEAVHSAKEY…IQQFVKLFES (85 aa)) enclose the KH-like domain. Residues 213–243 (EYTQSAATGPSSARDEVVVQEDSRNKARTPV) are disordered. Polar residues predominate over residues 214 to 223 (YTQSAATGPS). Residues 225 to 237 (ARDEVVVQEDSRN) show a composition bias toward basic and acidic residues. A Phosphothreonine modification is found at threonine 241. A phosphoserine mark is found at serine 257, serine 269, and serine 299. Disordered stretches follow at residues 273–339 (DALS…DGKD), 394–433 (RDFP…QSHT), and 472–564 (IWGS…PPLP). Polar residues-rich tracts occupy residues 405–433 (ASQS…QSHT) and 523–537 (GFQQ…NNTK). Over residues 551–564 (QPKPNYPPLSPPLP) the composition is skewed to pro residues. Serine 560 is subject to Phosphoserine. Residues 615-767 (LKHIVIDGSN…LGRNGPRLEE (153 aa)) enclose the RNase NYN domain. A disordered region spans residues 793–820 (PGFRSPSTQVANNSHQPPPRIQTSSSPW). The span at 797–820 (SPSTQVANNSHQPPPRIQTSSSPW) shows a compositional bias: polar residues. The segment at 846-893 (RSSAETSELREALLKIFPDSEQKLKIDQILAAHPYMKDLNALSALVLD) is coCUN.

This sequence belongs to the N4BP1 family. As to quaternary structure, interacts with NEDD4. Interacts with ITCH (via WW domain 2). Post-translationally, proteolytically cleaved by CASP8 downstream of TLR3 or TLR4, leading to its inactivation. Mainly cleaved at Asp-488 by CASP8. Cleaved by caspase-like protein MALT1, leading to its inactivation. In terms of processing, mono- and polyubiquitinated on the CoCUN region. Monoubiquitinated by NEDD4. Polyubiquitinated, leading to its degradation by the proteasome. Sumoylated with SUMO1, abrogating polyubiquitination and subsequent degradation. Desumoylated by SENP1, leading to accumulation in PML nuclear bodies.

The protein localises to the cytoplasm. It is found in the cytosol. The protein resides in the nucleus. It localises to the nucleolus. Its subcellular location is the PML body. With respect to regulation, proteolytic cleavage by CASP8 or MALT1 leads to its inactivation. Its function is as follows. Potent suppressor of cytokine production that acts as a regulator of innate immune signaling and inflammation. Acts as a key negative regulator of select cytokine and chemokine responses elicited by TRIF-independent Toll-like receptors (TLRs), thereby limiting inflammatory cytokine responses to minor insults. In response to more threatening pathogens, cleaved by CASP8 downstream of TLR3 or TLR4, leading to its inactivation, thereby allowing production of inflammatory cytokines. Acts as a restriction factor against some viruses: restricts viral replication by binding to mRNA viruses and mediating their degradation via its ribonuclease activity. Also acts as an inhibitor of the E3 ubiquitin-protein ligase ITCH: acts by interacting with the second WW domain of ITCH, leading to compete with ITCH's substrates and impairing ubiquitination of substrates. This is NEDD4-binding protein 1 from Mus musculus (Mouse).